The following is a 297-amino-acid chain: N-acetylmuramic acid 6-phosphate etherase (297 aa).

The SIS domain maps to alanine 55–lysine 218. The Proton donor role is filled by glutamate 83. Residue glutamate 114 is part of the active site.

It belongs to the GCKR-like family. MurNAc-6-P etherase subfamily. Homodimer.

It catalyses the reaction N-acetyl-D-muramate 6-phosphate + H2O = N-acetyl-D-glucosamine 6-phosphate + (R)-lactate. It participates in amino-sugar metabolism; 1,6-anhydro-N-acetylmuramate degradation. The protein operates within amino-sugar metabolism; N-acetylmuramate degradation. Its pathway is cell wall biogenesis; peptidoglycan recycling. Functionally, specifically catalyzes the cleavage of the D-lactyl ether substituent of MurNAc 6-phosphate, producing GlcNAc 6-phosphate and D-lactate. Together with AnmK, is also required for the utilization of anhydro-N-acetylmuramic acid (anhMurNAc) either imported from the medium or derived from its own cell wall murein, and thus plays a role in cell wall recycling. The protein is N-acetylmuramic acid 6-phosphate etherase of Serratia proteamaculans (strain 568).